The sequence spans 859 residues: DNA (cytosine-5)-methyltransferase 3B (859 aa).

Positions 1–305 are interaction with DNMT1 and DNMT3A; sequence MKGDSRHLNE…LATFNKLVSY (305 aa). Positions 25-226 are disordered; it reads GNFSDQSSDT…RDGDSTEYQD (202 aa). Over residues 85–94 the composition is skewed to acidic residues; sequence DRDDEVDDGN. A Phosphoserine modification is found at Ser-96. A Glycyl lysine isopeptide (Lys-Gly) (interchain with G-Cter in SUMO2) cross-link involves residue Lys-102. Residues 103–114 show a composition bias toward basic and acidic residues; it reads LTRETKDTRTRS. Thr-112 carries the post-translational modification Phosphothreonine. Ser-116 bears the Phosphoserine mark. Positions 167-179 are enriched in low complexity; sequence SSSASTPWSSPAS. The span at 189-198 shows a compositional bias: polar residues; that stretch reads KSVSTPSVDL. Basic and acidic residues predominate over residues 214 to 226; sequence AESRDGDSTEYQD. The residue at position 216 (Ser-216) is a Phosphoserine. The 59-residue stretch at 232–290 folds into the PWWP domain; sequence IGDLVWGKIKGFSWWPAMVVSWKATSKRQAMPGMRWVQWFGDGKFSEISADKLVALGLF. Residues 348 to 429 are disordered; sequence KPTGIEGLKP…ESRERMASEV (82 aa). 2 stretches are compositionally biased toward basic and acidic residues: residues 370–381 and 412–426; these read RRSDSRNLEPRR and GKDRGEDEESRERMA. Arg-415 is subject to Citrulline. The region spanning 428 to 560 is the ADD domain; sequence EVTNNKGNLE…LQDFFTTDPD (133 aa). The GATA-type; atypical zinc-finger motif lies at 439-469; it reads RCLSCGKKNPVSFHPLFEGGLCQSCRDRFLE. Residues 440–532 are interaction with the PRC2/EED-EZH2 complex; the sequence is CLSCGKKNPV…LQEPWSCYMC (93 aa). The PHD-type; atypical zinc finger occupies 480–536; sequence QSYCTVCCEGRELLLCSNTSCCRCFCVECLEVLVGAGTAEDAKLQEPWSCYMCLPQR. Positions 581 to 859 constitute an SAM-dependent MTase C5-type domain; it reads IRVLSLFDGI…APLKDYFACE (279 aa). Residues 588-592 and Glu-611 contribute to the S-adenosyl-L-methionine site; that span reads DGIAT. Residue Lys-623 forms a Glycyl lysine isopeptide (Lys-Gly) (interchain with G-Cter in SUMO2) linkage. Position 633 to 635 (633 to 635) interacts with S-adenosyl-L-methionine; that stretch reads DVR. Cys-657 is a catalytic residue. 838-840 is an S-adenosyl-L-methionine binding site; sequence RSW.

It belongs to the class I-like SAM-binding methyltransferase superfamily. C5-methyltransferase family. Interacts with CBX4, DNMT1, DNMT3A, SETDB1, UBE2I9, UBL1 and ZHX1. Interacts with SUV39H1 and BAZ2A/TIP5. Interacts with the PRC2/EED-EZH2 complex. Interacts with UHRF1. In terms of processing, sumoylated. Citrullinated by PADI4.

Its subcellular location is the nucleus. The enzyme catalyses a 2'-deoxycytidine in DNA + S-adenosyl-L-methionine = a 5-methyl-2'-deoxycytidine in DNA + S-adenosyl-L-homocysteine + H(+). With respect to regulation, activated by binding to the regulatory factor DNMT3L. Its function is as follows. Required for genome-wide de novo methylation and is essential for the establishment of DNA methylation patterns during development. DNA methylation is coordinated with methylation of histones. May preferentially methylates nucleosomal DNA within the nucleosome core region. May function as transcriptional co-repressor by associating with CBX4 and independently of DNA methylation. Seems to be involved in gene silencing. In association with DNMT1 and via the recruitment of CTCFL/BORIS, involved in activation of BAG1 gene expression by modulating dimethylation of promoter histone H3 at H3K4 and H3K9. Functions as a transcriptional corepressor by associating with ZHX1. Required for DUX4 silencing in somatic cells. In Mus musculus (Mouse), this protein is DNA (cytosine-5)-methyltransferase 3B (Dnmt3b).